The primary structure comprises 132 residues: Small ribosomal subunit protein uS8 (132 aa).

Belongs to the universal ribosomal protein uS8 family. As to quaternary structure, part of the 30S ribosomal subunit. Contacts proteins S5 and S12.

One of the primary rRNA binding proteins, it binds directly to 16S rRNA central domain where it helps coordinate assembly of the platform of the 30S subunit. The sequence is that of Small ribosomal subunit protein uS8 from Micrococcus luteus (strain ATCC 4698 / DSM 20030 / JCM 1464 / CCM 169 / CCUG 5858 / IAM 1056 / NBRC 3333 / NCIMB 9278 / NCTC 2665 / VKM Ac-2230) (Micrococcus lysodeikticus).